A 513-amino-acid polypeptide reads, in one-letter code: MSNETATLVKLSAAEQAAAIKKGDVTSRELVEAHLKVIEAAEPSIKAFLKVSGDVALEQADAFDAKSAEDKAALPELAGVPIAIKDMIVTKGIETTAASKILEGWVPPYDATVIEKLKAAGMPILGKTNLDEFAQGSSTEHSAYQTTHNPWDTERVPGGSGGGSASAVAAFEAPIALGTDTGGSIRQPGALTGTVGVKPTYGGVSRFGAIAMASSLDQIGPVSRTVLDSALLQEIIGGHDKRDSTSIPEGPRPMVAAAREGAKRDLKGMKVGLIKELGGEGFQPGVEARFGEAVDKLKDMGAEVVEVSCPHIGYSLGAYYIIMPSEVSSNLARYDGMRYGLRVMPPAGVPQTAANMMAYTREAGFGDEVKRRIILGTYALSAGYYDAWYGSAQKVRTLIIEDFKKAFEQVDVLISPTSPSTAFKFGEKMDDPLAMYVNDIATIPANLAGMPAMSIPAGLSDDGLPVGFQFIAPQQRDEVMYKPAAALEAALEDGWNGPIWNDLKTPWLDGLGK.

Catalysis depends on charge relay system residues lysine 85 and serine 160. Serine 184 functions as the Acyl-ester intermediate in the catalytic mechanism.

This sequence belongs to the amidase family. GatA subfamily. In terms of assembly, heterotrimer of A, B and C subunits.

The catalysed reaction is L-glutamyl-tRNA(Gln) + L-glutamine + ATP + H2O = L-glutaminyl-tRNA(Gln) + L-glutamate + ADP + phosphate + H(+). Functionally, allows the formation of correctly charged Gln-tRNA(Gln) through the transamidation of misacylated Glu-tRNA(Gln) in organisms which lack glutaminyl-tRNA synthetase. The reaction takes place in the presence of glutamine and ATP through an activated gamma-phospho-Glu-tRNA(Gln). This is Glutamyl-tRNA(Gln) amidotransferase subunit A from Bifidobacterium longum subsp. infantis (strain ATCC 15697 / DSM 20088 / JCM 1222 / NCTC 11817 / S12).